Consider the following 423-residue polypeptide: MAGKRSGWSRAALLQLLLGVNLVVMPPTRARSLRFVTLLYRHGDRSPVKTYPKDPYQEEEWPQGFGQLTKEGMLQHWELGQALRQRYHGFLNTSYHRQEVYVRSTDFDRTLMSAEANLAGLFPPNGMQRFNPNISWQPIPVHTVPITEDRLLKFPLGPCPRYEQLQNETRQTPEYQNESSRNAQFLDMVANETGLTDLTLETVWNVYDTLFCEQTHGLRLPPWASPQTMQRLSRLKDFSFRFLFGIYQQAEKARLQGGVLLAQIRKNLTLMATTSQLPKLLVYSAHDTTLVALQMALDVYNGEQAPYASCHIFELYQEDSGNFSVEMYFRNESDKAPWPLSLPGCPHRCPLQDFLRLTEPVVPKDWQQECQLASGPADTEVIVALAVCGSILFLLIVLLLTVLFRMQAQPPGYRHVADGEDHA.

Positions 1–30 (MAGKRSGWSRAALLQLLLGVNLVVMPPTRA) are cleaved as a signal peptide. Over 31-380 (RSLRFVTLLY…QLASGPADTE (350 aa)) the chain is Lumenal. Catalysis depends on His-42, which acts as the Nucleophile. Asn-92, Asn-133, Asn-167, Asn-177, Asn-191, and Asn-267 each carry an N-linked (GlcNAc...) asparagine glycan. Cystine bridges form between Cys-159-Cys-370, Cys-212-Cys-310, and Cys-345-Cys-349. Asp-287 serves as the catalytic Proton donor. N-linked (GlcNAc...) asparagine glycosylation is found at Asn-322 and Asn-331. A helical transmembrane segment spans residues 381–401 (VIVALAVCGSILFLLIVLLLT). Residues 402–423 (VLFRMQAQPPGYRHVADGEDHA) are Cytoplasmic-facing.

The protein belongs to the histidine acid phosphatase family. Post-translationally, the membrane-bound form is converted to the soluble form by sequential proteolytic processing. First, the C-terminal cytoplasmic tail is removed. Cleavage by a lysosomal protease releases the soluble form in the lysosome lumen. N-glycosylated. The intermediates formed during enzymatic deglycosylation suggest that all eight predicted N-glycosylation sites are used.

It is found in the lysosome membrane. The protein localises to the lysosome lumen. The enzyme catalyses a phosphate monoester + H2O = an alcohol + phosphate. The sequence is that of Lysosomal acid phosphatase (ACP2) from Homo sapiens (Human).